The chain runs to 356 residues: Guanine nucleotide-binding protein alpha-17 subunit (356 aa).

A lipid anchor (N-myristoyl glycine) is attached at G2. C4 is lipidated: S-palmitoyl cysteine. The G-alpha domain occupies 32 to 356 (SIVKLLLLGA…QKNLQKAGMM (325 aa)). Residues 35–48 (KLLLLGAGECGKST) are G1 motif. Residues 40–47 (GAGECGKS), 177–183 (LYSRVAT), 202–206 (DVGGQ), 271–274 (NKKD), and A328 contribute to the GTP site. Positions 47 and 183 each coordinate Mg(2+). The segment at 175–183 (DILYSRVAT) is G2 motif. The tract at residues 198-207 (FRVFDVGGQR) is G3 motif. A G4 motif region spans residues 267-274 (ILFMNKKD). The interval 326 to 331 (TCATDT) is G5 motif.

The protein belongs to the G-alpha family. In terms of assembly, g proteins are composed of 3 units; alpha, beta and gamma. The alpha chain contains the guanine nucleotide binding site.

The protein localises to the cell projection. The protein resides in the cilium. It localises to the dendrite. Its function is as follows. Guanine nucleotide-binding proteins (G proteins) are involved as modulators or transducers in various transmembrane signaling systems. This specific G-alpha subunit plays an important role in olfaction and in cilia morphogenesis. Involved in chemotactic responses to attractants diacetyl, pyrazine, 2,4,5-trimethylthiazole, benzaldehyde, isoamyl alcohol, butanone and 2,3-pentanedione. Displays a redundant function with gpa-3 in chemotactic responses. Involved in avoidance responses to copper, sodium dodecyl sulfate and linoleic acid. Involved in osmotic avoidance and mechanosensory responses. Involved in specifying fan-like morphology of cilia of head sensory neurons AWC. In Caenorhabditis briggsae, this protein is Guanine nucleotide-binding protein alpha-17 subunit (odr-3).